The chain runs to 426 residues: Probable imidazolonepropionase (426 aa).

4-imidazolone-5-propanoate contacts are provided by Y159 and H192. Position 159 (Y159) interacts with N-formimidoyl-L-glutamate. H260 serves as a coordination point for Fe(3+). Residue H260 participates in Zn(2+) binding. Residue E263 coordinates 4-imidazolone-5-propanoate. A Fe(3+)-binding site is contributed by D334. D334 contributes to the Zn(2+) binding site. N-formimidoyl-L-glutamate is bound at residue N336.

This sequence belongs to the metallo-dependent hydrolases superfamily. HutI family. Zn(2+) is required as a cofactor. The cofactor is Fe(3+).

The catalysed reaction is 4-imidazolone-5-propanoate + H2O = N-formimidoyl-L-glutamate. It functions in the pathway amino-acid degradation; L-histidine degradation into L-glutamate; N-formimidoyl-L-glutamate from L-histidine: step 3/3. The polypeptide is Probable imidazolonepropionase (AMDHD1) (Homo sapiens (Human)).